The sequence spans 146 residues: Catabolic 3-dehydroquinase (146 aa).

Tyr-24 (proton acceptor) is an active-site residue. Residues Asn-78, His-84, and Asp-91 each coordinate substrate. The Proton donor role is filled by His-104. Substrate is bound by residues 105 to 106 (IT) and Arg-115.

The protein belongs to the type-II 3-dehydroquinase family. As to quaternary structure, homododecamer. Adopts a ring-like structure, composed of an arrangement of two hexameric rings stacked on top of one another.

The enzyme catalyses 3-dehydroquinate = 3-dehydroshikimate + H2O. It functions in the pathway aromatic compound metabolism; 3,4-dihydroxybenzoate biosynthesis; 3,4-dihydroxybenzoate from 3-dehydroquinate: step 1/2. In terms of biological role, is involved in the catabolism of quinate. Allows the utilization of quinate as carbon source via the beta-ketoadipate pathway. The sequence is that of Catabolic 3-dehydroquinase from Candida dubliniensis (strain CD36 / ATCC MYA-646 / CBS 7987 / NCPF 3949 / NRRL Y-17841) (Yeast).